We begin with the raw amino-acid sequence, 639 residues long: Chaperone protein DnaK (639 aa).

Residue Thr-198 is modified to Phosphothreonine; by autocatalysis. The disordered stretch occupies residues 601–639 (AQQAPGADSCGGDCGQQQEAGAKPKDEKVVDADFEEVKK). The segment covering 622–639 (AKPKDEKVVDADFEEVKK) has biased composition (basic and acidic residues).

The protein belongs to the heat shock protein 70 family.

Acts as a chaperone. The protein is Chaperone protein DnaK of Trichlorobacter lovleyi (strain ATCC BAA-1151 / DSM 17278 / SZ) (Geobacter lovleyi).